Here is a 334-residue protein sequence, read N- to C-terminus: Cytoskeleton protein RodZ (334 aa).

Topologically, residues 1-111 (MNTEATHDQN…LGKRRKKRDG (111 aa)) are cytoplasmic. The HTH cro/C1-type domain occupies 19-71 (LRNAREQLGLSQQAVAERLCLKVSTVRDIEEDKAPSDLASTFLRGYIRSYARL). Residues 30 to 49 (QQAVAERLCLKVSTVRDIEE) constitute a DNA-binding region (H-T-H motif). The helical; Signal-anchor for type II membrane protein transmembrane segment at 112 to 132 (WLMSFTWLVLFVVVGLTGAWW) threads the bilayer. The Periplasmic segment spans residues 133 to 334 (WQNHKAQQEE…TLNAEPTPAQ (202 aa)). Positions 154-241 (LNADKDSGQS…PSALPTSQAG (88 aa)) are disordered. Low complexity-rich tracts occupy residues 176–211 (TTPAQTAPAPATPVDSTAATQTPAPTAAATQNTVVA) and 219–241 (TAATSAAPAATETPSALPTSQAG).

Belongs to the RodZ family.

The protein localises to the cell inner membrane. Cytoskeletal protein that is involved in cell-shape control through regulation of the length of the long axis. This is Cytoskeleton protein RodZ from Salmonella choleraesuis (strain SC-B67).